Reading from the N-terminus, the 256-residue chain is Thiazole synthase (256 aa).

Residue Lys-95 is the Schiff-base intermediate with DXP of the active site. 1-deoxy-D-xylulose 5-phosphate is bound by residues Gly-156, Ala-182 to Gly-183, and Asn-204 to Thr-205.

This sequence belongs to the ThiG family. In terms of assembly, homotetramer. Forms heterodimers with either ThiH or ThiS.

The protein localises to the cytoplasm. The enzyme catalyses [ThiS sulfur-carrier protein]-C-terminal-Gly-aminoethanethioate + 2-iminoacetate + 1-deoxy-D-xylulose 5-phosphate = [ThiS sulfur-carrier protein]-C-terminal Gly-Gly + 2-[(2R,5Z)-2-carboxy-4-methylthiazol-5(2H)-ylidene]ethyl phosphate + 2 H2O + H(+). It functions in the pathway cofactor biosynthesis; thiamine diphosphate biosynthesis. Functionally, catalyzes the rearrangement of 1-deoxy-D-xylulose 5-phosphate (DXP) to produce the thiazole phosphate moiety of thiamine. Sulfur is provided by the thiocarboxylate moiety of the carrier protein ThiS. In vitro, sulfur can be provided by H(2)S. The chain is Thiazole synthase from Enterobacter sp. (strain 638).